A 260-amino-acid chain; its full sequence is Sulfoquinovose 1-dehydrogenase (260 aa).

Tyr-160 acts as the Proton acceptor in catalysis.

Belongs to the short-chain dehydrogenases/reductases (SDR) family.

It carries out the reaction 6-sulfo-D-quinovose + NAD(+) = 6-deoxy-6-sulfo-D-glucono-1,5-lactone + NADH + H(+). Its function is as follows. Catalyzes the oxidation of sulfoquinovose to 6-deoxy-6-sulfo-D-glucono-1,5-lactone, with a strong preference for NAD(+) as the electron acceptor. Is involved in a degradation pathway of sulfoquinovose (SQ) that allows P.putida SQ1 to use SQ as the sole carbon and energy source for growth. In Pseudomonas putida (Arthrobacter siderocapsulatus), this protein is Sulfoquinovose 1-dehydrogenase.